Consider the following 399-residue polypeptide: Lysosomal acid lipase/cholesteryl ester hydrolase (399 aa).

An N-terminal signal peptide occupies residues 1–27 (MKMRFLGLVVCLVLWTLHSEASGGKLT). Residues 28–76 (AVNPETNMNVSEIISYWGFPSEEYLVETEDGYILCLNRIPHGRKNHSDK) constitute a propeptide, removed in mature form. Residues N36, N72, N101, and N161 are each glycosylated (N-linked (GlcNAc...) asparagine). One can recognise an AB hydrolase-1 domain in the interval 80–380 (PVVFLQHGLL…EWEHLDFIWG (301 aa)). The Charge relay system role is filled by S174. N273 and N321 each carry an N-linked (GlcNAc...) asparagine glycan. The active-site Charge relay system is H374.

Belongs to the AB hydrolase superfamily. Lipase family. Monomer. Post-translationally, glycosylation is not essential for catalytic activity.

Its subcellular location is the lysosome. The catalysed reaction is a sterol ester + H2O = a sterol + a fatty acid + H(+). It catalyses the reaction cholesteryl (9Z-octadecenoate) + H2O = cholesterol + (9Z)-octadecenoate + H(+). It carries out the reaction a triacylglycerol + H2O = a 1,2-diacylglycerol + a fatty acid + H(+). The enzyme catalyses 1,2-di-(9Z-octadecenoyl)-glycerol + (9Z)-octadecenoate + H(+) = 1,2,3-tri-(9Z-octadecenoyl)-glycerol + H2O. The catalysed reaction is a 1,2-diacylglycerol + H2O = a 1-acylglycerol + a fatty acid + H(+). It catalyses the reaction 1,2-di-(9Z-octadecenoyl)-glycerol + H2O = 1-(9Z-octadecenoyl)-glycerol + (9Z)-octadecenoate + H(+). It carries out the reaction a 1,3-diacylglycerol + H2O = a 1-acylglycerol + a fatty acid + H(+). The enzyme catalyses 1,3-di-(9Z-octadecenoyl)-glycerol + H2O = 1-(9Z-octadecenoyl)-glycerol + (9Z)-octadecenoate + H(+). Functionally, catalyzes the deacylation of cholesteryl ester core lipids of endocytosed low density lipoproteins to generate free fatty acids and cholesterol. Hydrolyzes triglycerides (1,2,3-triacylglycerol) and diglycerides (such as 1,2-diacylglycerol and 1,3-diacylglycerol) with preference for the acyl moieties at the sn-1 or sn-3 positions. This Macaca fascicularis (Crab-eating macaque) protein is Lysosomal acid lipase/cholesteryl ester hydrolase (LIPA).